The sequence spans 1693 residues: Putative stoned B-like protein (1693 aa).

Over residues 1–12 the composition is skewed to basic and acidic residues; it reads MSWRDRDFDPHG. 7 disordered regions span residues 1 to 54, 222 to 322, 334 to 371, 383 to 438, 585 to 807, 841 to 869, and 899 to 1024; these read MSWR…ELPA, NQIP…VEKS, TVEI…PTFS, KEMT…DPNA, GDYH…TSAA, KKME…DEED, and PVKE…FVAD. The segment covering 26-39 has biased composition (low complexity); it reads SSSERAASMRAMRS. Basic and acidic residues-rich tracts occupy residues 279 to 301 and 311 to 322; these read MEDK…KEET and TTEKHQNEVEKS. The span at 360 to 371 shows a compositional bias: acidic residues; it reads EEEEDDDLPTFS. Residues 393–412 are compositionally biased toward basic and acidic residues; the sequence is ENVENEKQEDTHISEGHVEY. Polar residues predominate over residues 596 to 615; the sequence is DENSTSAISGYEQNGASTSL. The span at 632-643 shows a compositional bias: low complexity; sequence YYQGQEYQQEYY. Residues 684 to 686 carry the DPF 1 motif; sequence DPF. The segment covering 708–722 has biased composition (low complexity); that stretch reads SPTPEASSSTGTSAP. Residues 745 to 760 show a composition bias toward pro residues; the sequence is PPRPPPAARPPPPRPA. The segment covering 786–807 has biased composition (polar residues); sequence KVSTAVKSTESTLKNLEETSAA. Over residues 899–913 the composition is skewed to basic and acidic residues; sequence PVKEIKKAPEIRRVD. 3 consecutive short sequence motifs (DPF) follow at residues 1006–1008, 1024–1026, and 1039–1041; these read DPF. The segment at 1062-1095 is disordered; the sequence is ANAENEDDFYNGRQSPTLSTPTPEGGSPISQQRP. Positions 1073-1095 are enriched in polar residues; that stretch reads GRQSPTLSTPTPEGGSPISQQRP. The SHD domain maps to 1136-1283; the sequence is GWDLMVRHPI…KCKITRTAKP (148 aa). The 320-residue stretch at 1287–1606 folds into the MHD domain; the sequence is QDEVQIHCYD…AKYQYKVEID (320 aa). Residues 1633 to 1693 are disordered; it reads ELHQPTFNPS…IQIDMKNYGY (61 aa). Polar residues predominate over residues 1637-1651; sequence PTFNPSTQESDTQQG.

The protein belongs to the Stoned B family.

The protein resides in the cytoplasm. Potential adapter protein, which may be involved in endocytic vesicle recycling of synaptic vesicles. The sequence is that of Putative stoned B-like protein (unc-41) from Caenorhabditis elegans.